Consider the following 454-residue polypeptide: Argininosuccinate synthase (454 aa).

ATP-binding positions include alanine 17–serine 25 and alanine 43. Tyrosine 99 lines the L-citrulline pocket. Positions 129 and 131 each coordinate ATP. L-aspartate is bound by residues threonine 131, asparagine 135, and aspartate 136. Asparagine 135 is an L-citrulline binding site. Position 136 (aspartate 136) interacts with ATP. L-citrulline-binding residues include arginine 139 and serine 192. Residue aspartate 194 coordinates ATP. L-citrulline contacts are provided by threonine 201, glutamate 203, and glutamate 280.

This sequence belongs to the argininosuccinate synthase family. Type 2 subfamily. In terms of assembly, homotetramer.

It localises to the cytoplasm. It catalyses the reaction L-citrulline + L-aspartate + ATP = 2-(N(omega)-L-arginino)succinate + AMP + diphosphate + H(+). Its pathway is amino-acid biosynthesis; L-arginine biosynthesis; L-arginine from L-ornithine and carbamoyl phosphate: step 2/3. In Yersinia enterocolitica serotype O:8 / biotype 1B (strain NCTC 13174 / 8081), this protein is Argininosuccinate synthase.